We begin with the raw amino-acid sequence, 118 residues long: Small ribosomal subunit protein uS13 (118 aa).

Residues 99 to 118 (GQRTRTNARTRKGPRKAIKK) are disordered.

It belongs to the universal ribosomal protein uS13 family. As to quaternary structure, part of the 30S ribosomal subunit. Forms a loose heterodimer with protein S19. Forms two bridges to the 50S subunit in the 70S ribosome.

Functionally, located at the top of the head of the 30S subunit, it contacts several helices of the 16S rRNA. In the 70S ribosome it contacts the 23S rRNA (bridge B1a) and protein L5 of the 50S subunit (bridge B1b), connecting the 2 subunits; these bridges are implicated in subunit movement. Contacts the tRNAs in the A and P-sites. This Xylella fastidiosa (strain M23) protein is Small ribosomal subunit protein uS13.